The sequence spans 370 residues: Uroporphyrinogen decarboxylase (370 aa).

Residues 29-33, Asp-79, Tyr-155, Ser-210, and His-342 each bind substrate; that span reads RQAGR.

The protein belongs to the uroporphyrinogen decarboxylase family. In terms of assembly, homodimer.

The protein localises to the cytoplasm. It carries out the reaction uroporphyrinogen III + 4 H(+) = coproporphyrinogen III + 4 CO2. The protein operates within porphyrin-containing compound metabolism; protoporphyrin-IX biosynthesis; coproporphyrinogen-III from 5-aminolevulinate: step 4/4. In terms of biological role, catalyzes the decarboxylation of four acetate groups of uroporphyrinogen-III to yield coproporphyrinogen-III. The polypeptide is Uroporphyrinogen decarboxylase (Variovorax paradoxus (strain S110)).